Consider the following 767-residue polypeptide: Probable beta-glucosidase K (767 aa).

N-linked (GlcNAc...) asparagine glycosylation occurs at Asn19. Asp232 is a catalytic residue. Asn324, Asn477, and Asn749 each carry an N-linked (GlcNAc...) asparagine glycan. The region spanning 405–552 (EGQPGLRMRF…DPERAIARAV (148 aa)) is the PA14 domain. The tract at residues 727-767 (LGRRGRSGSSPAVYRGRSNNVVNRTSHQGAQRISKGGFAAR) is disordered. Residues 743–757 (RSNNVVNRTSHQGAQ) show a composition bias toward polar residues.

It belongs to the glycosyl hydrolase 3 family.

It localises to the secreted. The enzyme catalyses Hydrolysis of terminal, non-reducing beta-D-glucosyl residues with release of beta-D-glucose.. It participates in glycan metabolism; cellulose degradation. Its function is as follows. Beta-glucosidases are one of a number of cellulolytic enzymes involved in the degradation of cellulosic biomass. Catalyzes the last step releasing glucose from the inhibitory cellobiose. The chain is Probable beta-glucosidase K (bglK) from Aspergillus fumigatus (strain ATCC MYA-4609 / CBS 101355 / FGSC A1100 / Af293) (Neosartorya fumigata).